Reading from the N-terminus, the 151-residue chain is Large ribosomal subunit protein uL15 (151 aa).

The interval 1-57 (MTLRLDSLKSNKGARRRKLRKGRGIAAGQGASCGFGMRGQKSRSGRPTRPGFEGGQM) is disordered. A compositionally biased stretch (basic residues) spans 12 to 23 (KGARRRKLRKGR). Over residues 25–37 (IAAGQGASCGFGM) the composition is skewed to gly residues.

Belongs to the universal ribosomal protein uL15 family. In terms of assembly, part of the 50S ribosomal subunit.

Binds to the 23S rRNA. This is Large ribosomal subunit protein uL15 from Synechococcus sp. (strain CC9605).